The sequence spans 427 residues: Gamma-glutamyl phosphate reductase (427 aa).

This sequence belongs to the gamma-glutamyl phosphate reductase family.

Its subcellular location is the cytoplasm. It carries out the reaction L-glutamate 5-semialdehyde + phosphate + NADP(+) = L-glutamyl 5-phosphate + NADPH + H(+). Its pathway is amino-acid biosynthesis; L-proline biosynthesis; L-glutamate 5-semialdehyde from L-glutamate: step 2/2. Functionally, catalyzes the NADPH-dependent reduction of L-glutamate 5-phosphate into L-glutamate 5-semialdehyde and phosphate. The product spontaneously undergoes cyclization to form 1-pyrroline-5-carboxylate. In Brucella melitensis biotype 2 (strain ATCC 23457), this protein is Gamma-glutamyl phosphate reductase.